Here is a 773-residue protein sequence, read N- to C-terminus: DEAD-box ATP-dependent RNA helicase 32 (773 aa).

Positions 28–71 (IDAGKPARGTRPPPLSKSSSSPADTAAAKRGAKGAGGVPSKAAG) are disordered. A compositionally biased stretch (low complexity) spans 43–56 (SKSSSSPADTAAAK). Positions 80 to 108 (ARFDELPLSNKTKDGLRKAGYTEMSEIQR) match the Q motif motif. One can recognise a Helicase ATP-binding domain in the interval 111–287 (LPHALCGRDV…RVSLKDPEYI (177 aa)). Residue 124–131 (AKTGSGKT) participates in ATP binding. Residues 235-238 (DEAD) carry the DEAD box motif. Positions 309 to 462 (PLEQKLNMLW…IKKPNTEQLQ (154 aa)) constitute a Helicase C-terminal domain. The stretch at 664-715 (DKDKISQRYAEMLREMQEHDKEDKLEHKRILREKKLQKKLKLKRKRNEEMDA) forms a coiled coil. Residues 699–708 (LQKKLKLKRK) show a composition bias toward basic residues. The segment at 699-755 (LQKKLKLKRKRNEEMDAGSENSGSESDRDQRTASKGKKRYFNSDDEEGSKDAAKDGD) is disordered.

It belongs to the DEAD box helicase family. DDX10/DBP4 subfamily.

It carries out the reaction ATP + H2O = ADP + phosphate + H(+). The chain is DEAD-box ATP-dependent RNA helicase 32 from Oryza sativa subsp. japonica (Rice).